The sequence spans 361 residues: Teichoic acids export ATP-binding protein TagH (361 aa).

In terms of domain architecture, ABC transporter spans 13–246; it reads TKEYDLYKSQ…YREFTKWFKG (234 aa). 60 to 67 is a binding site for ATP; that stretch reads GVNGSGKS. Positions 247-361 are unknown; the sequence is QSKKEKKHFQ…HDTNATSGVK (115 aa).

The protein belongs to the ABC transporter superfamily. Teichoic acids exporter (TC 3.A.1.104.1) family. In terms of assembly, the complex is composed of two ATP-binding proteins (TagH) and two transmembrane proteins (TagG).

The protein localises to the cell membrane. It carries out the reaction ATP + H2O + teichoic acidSide 1 = ADP + phosphate + teichoic acidSide 2.. Part of the ABC transporter complex TagGH involved in teichoic acids export. Responsible for energy coupling to the transport system. The chain is Teichoic acids export ATP-binding protein TagH from Levilactobacillus brevis (strain ATCC 367 / BCRC 12310 / CIP 105137 / JCM 1170 / LMG 11437 / NCIMB 947 / NCTC 947) (Lactobacillus brevis).